The following is a 166-amino-acid chain: Interferon gamma (166 aa).

Positions 1–23 are cleaved as a signal peptide; the sequence is MSYTTYFLAFQLCVTLCFSGSYC. Residue Gln-24 is modified to Pyrrolidone carboxylic acid. Asn-39 and Asn-106 each carry an N-linked (GlcNAc...) asparagine glycan.

It belongs to the type II (or gamma) interferon family. As to quaternary structure, homodimer. Interacts with IFNGR1 (via extracellular domain); this interaction promotes IFNGR1 dimerization. In terms of tissue distribution, released primarily from activated T lymphocytes.

The protein resides in the secreted. Type II interferon produced by immune cells such as T-cells and NK cells that plays crucial roles in antimicrobial, antiviral, and antitumor responses by activating effector immune cells and enhancing antigen presentation. Primarily signals through the JAK-STAT pathway after interaction with its receptor IFNGR1 to affect gene regulation. Upon IFNG binding, IFNGR1 intracellular domain opens out to allow association of downstream signaling components JAK2, JAK1 and STAT1, leading to STAT1 activation, nuclear translocation and transcription of IFNG-regulated genes. Many of the induced genes are transcription factors such as IRF1 that are able to further drive regulation of a next wave of transcription. Plays a role in class I antigen presentation pathway by inducing a replacement of catalytic proteasome subunits with immunoproteasome subunits. In turn, increases the quantity, quality, and repertoire of peptides for class I MHC loading. Increases the efficiency of peptide generation also by inducing the expression of activator PA28 that associates with the proteasome and alters its proteolytic cleavage preference. Up-regulates as well MHC II complexes on the cell surface by promoting expression of several key molecules such as cathepsins B/CTSB, H/CTSH, and L/CTSL. Participates in the regulation of hematopoietic stem cells during development and under homeostatic conditions by affecting their development, quiescence, and differentiation. The polypeptide is Interferon gamma (IFNG) (Sus scrofa (Pig)).